A 33-amino-acid chain; its full sequence is Photosystem II reaction center protein T (33 aa).

A helical transmembrane segment spans residues 3–23 (ALVYTFLLVSTLGILFFSIFF).

Belongs to the PsbT family. In terms of assembly, PSII is composed of 1 copy each of membrane proteins PsbA, PsbB, PsbC, PsbD, PsbE, PsbF, PsbH, PsbI, PsbJ, PsbK, PsbL, PsbM, PsbT, PsbY, PsbZ, Psb30/Ycf12, at least 3 peripheral proteins of the oxygen-evolving complex and a large number of cofactors. It forms dimeric complexes.

The protein resides in the plastid. The protein localises to the chloroplast thylakoid membrane. Functionally, found at the monomer-monomer interface of the photosystem II (PS II) dimer, plays a role in assembly and dimerization of PSII. PSII is a light-driven water plastoquinone oxidoreductase, using light energy to abstract electrons from H(2)O, generating a proton gradient subsequently used for ATP formation. The polypeptide is Photosystem II reaction center protein T (Pelargonium hortorum (Common geranium)).